The primary structure comprises 199 residues: Recombination protein RecR (199 aa).

The C4-type zinc-finger motif lies at Cys58–Cys73. One can recognise a Toprim domain in the interval Gly81–Pro176.

This sequence belongs to the RecR family.

Functionally, may play a role in DNA repair. It seems to be involved in an RecBC-independent recombinational process of DNA repair. It may act with RecF and RecO. The protein is Recombination protein RecR of Paracoccus denitrificans (strain Pd 1222).